The primary structure comprises 485 residues: ATP synthase subunit beta (485 aa).

Residues 1–11 (MPATETADKNT) are compositionally biased toward basic and acidic residues. The interval 1–20 (MPATETADKNTKSANSDTSG) is disordered. An ATP-binding site is contributed by 170-177 (GGAGVGKT).

The protein belongs to the ATPase alpha/beta chains family. In terms of assembly, F-type ATPases have 2 components, CF(1) - the catalytic core - and CF(0) - the membrane proton channel. CF(1) has five subunits: alpha(3), beta(3), gamma(1), delta(1), epsilon(1). CF(0) has three main subunits: a(1), b(2) and c(9-12). The alpha and beta chains form an alternating ring which encloses part of the gamma chain. CF(1) is attached to CF(0) by a central stalk formed by the gamma and epsilon chains, while a peripheral stalk is formed by the delta and b chains.

Its subcellular location is the cell membrane. The catalysed reaction is ATP + H2O + 4 H(+)(in) = ADP + phosphate + 5 H(+)(out). Functionally, produces ATP from ADP in the presence of a proton gradient across the membrane. The catalytic sites are hosted primarily by the beta subunits. The protein is ATP synthase subunit beta of Mycobacterium avium (strain 104).